The sequence spans 156 residues: Small ribosomal subunit protein uS7 (156 aa).

Belongs to the universal ribosomal protein uS7 family. As to quaternary structure, part of the 30S ribosomal subunit. Contacts proteins S9 and S11.

Its function is as follows. One of the primary rRNA binding proteins, it binds directly to 16S rRNA where it nucleates assembly of the head domain of the 30S subunit. Is located at the subunit interface close to the decoding center, probably blocks exit of the E-site tRNA. The polypeptide is Small ribosomal subunit protein uS7 (Blochmanniella pennsylvanica (strain BPEN)).